The chain runs to 239 residues: Venom nerve growth factor (239 aa).

Positions 1-18 (MSMLCYTLIIAFLIGIWA) are cleaved as a signal peptide. A propeptide spanning residues 19-125 (APKSEDNVPL…ALNRNIQAKR (107 aa)) is cleaved from the precursor. Residues 47-66 (GLKTSRNTDQRHPAPKKADD) are compositionally biased toward basic and acidic residues. The interval 47 to 68 (GLKTSRNTDQRHPAPKKADDQE) is disordered. 3 disulfides stabilise this stretch: cysteine 139–cysteine 203, cysteine 181–cysteine 231, and cysteine 191–cysteine 233.

Belongs to the NGF-beta family. In terms of assembly, homodimer; non-covalently linked. In terms of tissue distribution, expressed by the venom gland.

Its subcellular location is the secreted. In terms of biological role, nerve growth factor is important for the development and maintenance of the sympathetic and sensory nervous systems. It stimulates division and differentiation of sympathetic and embryonic sensory neurons as well as basal forebrain cholinergic neurons in the brain. Its relevance in the snake venom is not clear. However, it has been shown to inhibit metalloproteinase-dependent proteolysis of platelet glycoprotein Ib alpha, suggesting a metalloproteinase inhibition to prevent metalloprotease autodigestion and/or protection against prey proteases. Binds a lipid between the two protein chains in the homodimer. The lipid-bound form promotes histamine relase from mouse mast cells, contrary to the lipid-free form. The chain is Venom nerve growth factor from Pseudechis porphyriacus (Red-bellied black snake).